A 640-amino-acid chain; its full sequence is Zinc finger and BTB domain-containing protein 22 (640 aa).

Positions 57–121 (CDVSIRVQGR…AYTGRLSMAA (65 aa)) constitute a BTB domain. Disordered regions lie at residues 191–244 (RSHA…PVFP), 308–327 (PAPA…EEED), and 332–482 (CEDD…GGTG). The segment covering 192-210 (SHASSRASENQSPSSSNYF) has biased composition (polar residues). Phosphoserine is present on serine 203. The segment covering 318-327 (PDLEEDEEED) has biased composition (acidic residues). Residues 431 to 442 (SSSSSSSSSSSS) show a composition bias toward low complexity. Residues 469–482 (GMPGGPGGTPGGTG) are compositionally biased toward gly residues. The segment at 490-511 (FLCHCGKAFSHKSMRDRHVNMH) adopts a C2H2-type 1; atypical zinc-finger fold. C2H2-type zinc fingers lie at residues 517 to 539 (FDCP…MKTH) and 545 to 571 (YECG…ERRH). Residues 571-640 (HRLVGGGGGG…MGFGGGGGTN (70 aa)) are disordered. A compositionally biased stretch (gly residues) spans 574–588 (VGGGGGGGPGPGGPT).

It belongs to the krueppel C2H2-type zinc-finger protein family.

It is found in the nucleus. In terms of biological role, may be involved in transcriptional regulation. In Canis lupus familiaris (Dog), this protein is Zinc finger and BTB domain-containing protein 22 (ZBTB22).